The chain runs to 356 residues: MEVRYKPEELTKLPRSVEYKERTVYMINQRLLPREFKVEAFRTVESVAEAIKNMTVRGAPAIGAAAAFGLALYAETSKAKSKDEFMDGFYKAYETLKNTRPTAVNLFWALNRIKKLVEEHLEDPLDEIKSLIVNEAQKIADEDVEANLRMGHYGAEVLPEGNLLTHCNAGSLATVHLGTVGAVVRVMHKDGSLKLLWLDETRPVLQGARLSAWEYSYDGLNVKLIADNAAAFVMQQGLVDAIIVGADRIVANGDFANKIGTYMLAVLAREHGIPFFAVAPLSSIDMSLKSGKEIPIEERSPEEVLTCGGCRIAPDVPVYNPAFDVTPHKYVTGIITDKRVVWPPFKRNLKKLFGEQ.

Substrate-binding positions include 57–59 (RGA), arginine 100, and glutamine 206. Aspartate 247 serves as the catalytic Proton donor. 257–258 (NK) lines the substrate pocket.

The protein belongs to the eIF-2B alpha/beta/delta subunits family. MtnA subfamily.

It catalyses the reaction 5-(methylsulfanyl)-alpha-D-ribose 1-phosphate = 5-(methylsulfanyl)-D-ribulose 1-phosphate. In terms of biological role, catalyzes the interconversion of methylthioribose-1-phosphate (MTR-1-P) into methylthioribulose-1-phosphate (MTRu-1-P). In Pyrococcus abyssi (strain GE5 / Orsay), this protein is Putative methylthioribose-1-phosphate isomerase (aIF-2BI).